Here is a 542-residue protein sequence, read N- to C-terminus: CTP synthase (542 aa).

The interval 1-265 (MARYVFITGG…DSEVLSAFGI (265 aa)) is amidoligase domain. Residue Ser-13 participates in CTP binding. Position 13 (Ser-13) interacts with UTP. 14–19 (SLGKGI) is a binding site for ATP. Tyr-54 contacts L-glutamine. Asp-71 is an ATP binding site. Residues Asp-71 and Glu-139 each contribute to the Mg(2+) site. Residues 146 to 148 (DIE), 186 to 191 (KTKPTQ), and Lys-222 contribute to the CTP site. UTP-binding positions include 186-191 (KTKPTQ) and Lys-222. Positions 291–541 (TIAVVGKYTG…IEAAIEQSRL (251 aa)) constitute a Glutamine amidotransferase type-1 domain. Residue Gly-353 coordinates L-glutamine. The active-site Nucleophile; for glutamine hydrolysis is Cys-380. Residues 381 to 384 (FGMQ), Glu-404, and Arg-469 contribute to the L-glutamine site. Residues His-514 and Glu-516 contribute to the active site.

This sequence belongs to the CTP synthase family. In terms of assembly, homotetramer.

It carries out the reaction UTP + L-glutamine + ATP + H2O = CTP + L-glutamate + ADP + phosphate + 2 H(+). The enzyme catalyses L-glutamine + H2O = L-glutamate + NH4(+). It catalyses the reaction UTP + NH4(+) + ATP = CTP + ADP + phosphate + 2 H(+). It participates in pyrimidine metabolism; CTP biosynthesis via de novo pathway; CTP from UDP: step 2/2. With respect to regulation, allosterically activated by GTP, when glutamine is the substrate; GTP has no effect on the reaction when ammonia is the substrate. The allosteric effector GTP functions by stabilizing the protein conformation that binds the tetrahedral intermediate(s) formed during glutamine hydrolysis. Inhibited by the product CTP, via allosteric rather than competitive inhibition. Catalyzes the ATP-dependent amination of UTP to CTP with either L-glutamine or ammonia as the source of nitrogen. Regulates intracellular CTP levels through interactions with the four ribonucleotide triphosphates. This is CTP synthase from Brucella melitensis biotype 1 (strain ATCC 23456 / CCUG 17765 / NCTC 10094 / 16M).